Reading from the N-terminus, the 124-residue chain is Colorectal cancer-associated protein 1 (124 aa).

The helical transmembrane segment at 77 to 97 (LYGCFCVGLVSGMAISVLLLA) threads the bilayer.

In terms of tissue distribution, expressed in gastrointestinal and immune tissue, as well as prostate, testis and ovary. Expressed in lamina propria and eosinophils but not in epithelial cells. Expression is greater in benign adjacent tissues than in colon tumors.

The protein resides in the membrane. In Homo sapiens (Human), this protein is Colorectal cancer-associated protein 1 (COLCA1).